We begin with the raw amino-acid sequence, 625 residues long: Complex I assembly factor ACAD9, mitochondrial (625 aa).

A mitochondrion-targeting transit peptide spans 1 to 41 (MSGYVLFSRGATAAAAAARASRVLRVFTERRRTLHTSLQSC). An N6-acetyllysine modification is found at Lys-45. At Lys-96 the chain carries N6-succinyllysine. The active-site Proton acceptor is the Glu-430. A Phosphothreonine modification is found at Thr-482. At Lys-525 the chain carries N6-acetyllysine; alternate. Lys-525 bears the N6-succinyllysine; alternate mark.

It belongs to the acyl-CoA dehydrogenase family. As to quaternary structure, homodimer. Interacts with NDUFAF1 and ECSIT. Part of the mitochondrial complex I assembly/MCIA complex that comprises at least the core subunits TMEM126B, NDUFAF1, ECSIT and ACAD9 and complement subunits such as COA1 and TMEM186. Interacts with TMEM70 and TMEM242. It depends on FAD as a cofactor.

The protein localises to the mitochondrion inner membrane. The enzyme catalyses eicosanoyl-CoA + oxidized [electron-transfer flavoprotein] + H(+) = (2E)-eicosenoyl-CoA + reduced [electron-transfer flavoprotein]. The catalysed reaction is octadecanoyl-CoA + oxidized [electron-transfer flavoprotein] + H(+) = (2E)-octadecenoyl-CoA + reduced [electron-transfer flavoprotein]. It catalyses the reaction oxidized [electron-transfer flavoprotein] + hexadecanoyl-CoA + H(+) = (2E)-hexadecenoyl-CoA + reduced [electron-transfer flavoprotein]. It carries out the reaction decanoyl-CoA + oxidized [electron-transfer flavoprotein] + H(+) = (2E)-decenoyl-CoA + reduced [electron-transfer flavoprotein]. The enzyme catalyses nonanoyl-CoA + oxidized [electron-transfer flavoprotein] + H(+) = (2E)-nonenoyl-CoA + reduced [electron-transfer flavoprotein]. The catalysed reaction is pentadecanoyl-CoA + oxidized [electron-transfer flavoprotein] + H(+) = (2E)-pentadecenoyl-CoA + reduced [electron-transfer flavoprotein]. It catalyses the reaction undecanoyl-CoA + oxidized [electron-transfer flavoprotein] + H(+) = trans-2-undecenoyl-CoA + reduced [electron-transfer flavoprotein]. It carries out the reaction (9Z)-hexadecenoyl-CoA + oxidized [electron-transfer flavoprotein] + H(+) = (2E,9Z)-hexadecadienoyl-CoA + reduced [electron-transfer flavoprotein]. The enzyme catalyses heptadecanoyl-CoA + oxidized [electron-transfer flavoprotein] + H(+) = trans-2-heptadecenoyl-CoA + reduced [electron-transfer flavoprotein]. The catalysed reaction is (9E)-octadecenoyl-CoA + oxidized [electron-transfer flavoprotein] + H(+) = (2E,9E)-octadecadienoyl-CoA + reduced [electron-transfer flavoprotein]. It catalyses the reaction oxidized [electron-transfer flavoprotein] + (9Z)-octadecenoyl-CoA + H(+) = (2E,9Z)-octadecadienoyl-CoA + reduced [electron-transfer flavoprotein]. It carries out the reaction (9Z,12Z)-octadecadienoyl-CoA + oxidized [electron-transfer flavoprotein] + H(+) = (2E,9Z,12Z)-octadecatrienoyl-CoA + reduced [electron-transfer flavoprotein]. The enzyme catalyses (4Z,7Z,10Z,13Z,16Z,19Z)-docosahexaenoyl-CoA + oxidized [electron-transfer flavoprotein] + H(+) = (2E,4Z,7Z,10Z,13Z,16Z,19Z)-docosaheptaenoyl-CoA + reduced [electron-transfer flavoprotein]. The catalysed reaction is tetradecanoyl-CoA + oxidized [electron-transfer flavoprotein] + H(+) = (2E)-tetradecenoyl-CoA + reduced [electron-transfer flavoprotein]. Functionally, as part of the MCIA complex, primarily participates in the assembly of the mitochondrial complex I and therefore plays a role in oxidative phosphorylation. This moonlighting protein also has a dehydrogenase activity toward a broad range of substrates with greater specificity for long-chain unsaturated acyl-CoAs. However, in vivo, it does not seem to play a primary role in fatty acid oxidation. In addition, the function in complex I assembly is independent of the dehydrogenase activity of the protein. In Rattus norvegicus (Rat), this protein is Complex I assembly factor ACAD9, mitochondrial.